The sequence spans 1161 residues: BMP-2-inducible protein kinase (1161 aa).

Positions 1 to 20 (MKKFSRMPKSEGGSGGGAAG) are disordered. Serine 14 bears the Phosphoserine mark. In terms of domain architecture, Protein kinase spans 51–316 (VTLEESLAEG…DIFQVSYFAF (266 aa)). ATP-binding positions include 57-65 (LAEGGFSTV) and lysine 79. Aspartate 180 functions as the Proton acceptor in the catalytic mechanism. Disordered stretches follow at residues 358-439 (TDTI…RVLQ), 453-495 (LQHR…HHHL), 610-630 (TNQK…FGED), and 655-832 (ERAS…TQDL). Residues 361-394 (IGPTETSIAPRQRPKANSATTATPSVLTIQSSAT) are compositionally biased toward polar residues. 2 stretches are compositionally biased toward low complexity: residues 422 to 439 (LLGQ…RVLQ) and 460 to 485 (QQQQ…QQQQ). The segment covering 610 to 619 (TNQKNISNPP) has biased composition (polar residues). Residue serine 689 is modified to Phosphoserine. 2 stretches are compositionally biased toward polar residues: residues 697–718 (SSIN…SPAS) and 726–735 (KTSVQGQVQK). The residue at position 742 (serine 742) is a Phosphoserine. The segment covering 755–779 (EEEEQDDEEVLQGEQGDFNDDDTEP) has biased composition (acidic residues). Residues 798-813 (EKHSSDSDYEQAKAKY) show a composition bias toward basic and acidic residues. A phosphoserine mark is found at serine 817 and serine 818. A Phosphothreonine modification is found at threonine 834. Serine 928 carries the post-translational modification Phosphoserine. The segment at 965 to 1035 (SQQQKVKQRS…RRDSQSSNEF (71 aa)) is disordered. Residues 970–984 (VKQRSLQKLSSRQRR) show a composition bias toward basic residues. The span at 1000–1011 (TPTSTKKTLKPT) shows a compositional bias: low complexity. A phosphoserine mark is found at serine 1029, serine 1031, serine 1032, serine 1039, serine 1041, serine 1076, serine 1107, and serine 1111. A compositionally biased stretch (polar residues) spans 1137-1146 (TPHQSQQSQP). The disordered stretch occupies residues 1137–1161 (TPHQSQQSQPVELDPFGAAPFPSKQ).

This sequence belongs to the protein kinase superfamily. Ser/Thr protein kinase family. Post-translationally, autophosphorylated.

It localises to the nucleus. The catalysed reaction is L-seryl-[protein] + ATP = O-phospho-L-seryl-[protein] + ADP + H(+). The enzyme catalyses L-threonyl-[protein] + ATP = O-phospho-L-threonyl-[protein] + ADP + H(+). May be involved in osteoblast differentiation. The polypeptide is BMP-2-inducible protein kinase (BMP2K) (Homo sapiens (Human)).